We begin with the raw amino-acid sequence, 154 residues long: Transcriptional repressor NrdR (154 aa).

The segment at 3–34 (CPYCRHPDSRVVDSREADDGQLIRRRRSCPEC) is a zinc-finger region. Residues 46-136 (LAVVKRSGVT…VYRSFESLAD (91 aa)) enclose the ATP-cone domain.

This sequence belongs to the NrdR family. Zn(2+) is required as a cofactor.

Its function is as follows. Negatively regulates transcription of bacterial ribonucleotide reductase nrd genes and operons by binding to NrdR-boxes. The protein is Transcriptional repressor NrdR of Salinispora tropica (strain ATCC BAA-916 / DSM 44818 / JCM 13857 / NBRC 105044 / CNB-440).